A 95-amino-acid chain; its full sequence is Leukocyte-specific transcript 1 protein (95 aa).

Residues 22–42 (LGLGGLLLLLVIILFICLCGF) form a helical membrane-spanning segment. At Ser64 the chain carries Phosphoserine.

The protein belongs to the LST1 family. In terms of tissue distribution, expressed in spleen and at lower levels in thymus and liver.

The protein localises to the membrane. Possible role in modulating immune responses. Has an inhibitory effect on lymphocyte proliferation. Induces morphological changes including production of filopodia and microspikes when overexpressed in a variety of cell types and may be involved in dendritic cell maturation. This is Leukocyte-specific transcript 1 protein (Lst1) from Mus musculus (Mouse).